Consider the following 619-residue polypeptide: TOX high mobility group box family member 4 (619 aa).

3 disordered regions span residues 155–227 (LSLG…QKPV), 304–335 (ELDP…TESP), and 436–458 (LPPP…QQQV). Thr-176 bears the Phosphothreonine mark. A phosphoserine mark is found at Ser-178 and Ser-182. Over residues 183–193 (LHEDGVDDFRR) the composition is skewed to basic and acidic residues. Basic residues predominate over residues 208 to 218 (KQKAPKKRKKK). The Nuclear localization signal signature appears at 213–218 (KKRKKK). Residues 223-291 (PQKPVSAYAL…EYLKALAAYK (69 aa)) constitute a DNA-binding region (HMG box). Thr-313 is modified (phosphothreonine). Residue Ser-315 is modified to Phosphoserine. The span at 320–335 (TTADPASPAPASTESP) shows a compositional bias: low complexity. Positions 436–453 (LPPPRLQPPPLQQMPQPP) are enriched in pro residues. The residue at position 479 (Arg-479) is an Asymmetric dimethylarginine. Ser-531, Ser-548, Ser-550, Ser-558, Ser-560, and Ser-565 each carry phosphoserine.

Component of the PNUTS-PP1 phosphatase complex, composed of PPP1R10/PNUTS, TOX4, WDR82 and PPP1CA or PPP1CB or PPP1CC. Interacts with PPP1R10/PNUTS. Interacts with FOXO1 and CREB1 (increased by cAMP); FOXO1 and CREB1 are required for full induction of TOX4-dependent activity and the interactions are inhibited by insulin.

It is found in the nucleus. It localises to the chromosome. In liver, recruited to target gene promoters following treatment with dexamethasone and cAMP. Binding is decreased in presence of insulin. Transcription factor that modulates cell fate reprogramming from the somatic state to the pluripotent and neuronal fate. In liver, controls the expression of hormone-regulated gluconeogenic genes such as G6PC1 and PCK1. This regulation is independent of the insulin receptor activation. Also acts as a regulatory component of protein phosphatase 1 (PP1) complexes. Component of the PNUTS-PP1 protein phosphatase complex, a PP1 complex that regulates RNA polymerase II transcription pause-release. PNUTS-PP1 also plays a role in the control of chromatin structure and cell cycle progression during the transition from mitosis into interphase. In Rattus norvegicus (Rat), this protein is TOX high mobility group box family member 4 (Tox4).